A 57-amino-acid polypeptide reads, in one-letter code: uncharacterized protein (57 aa).

A run of 2 helical transmembrane segments spans residues 4–26 (VNIL…SELW) and 33–55 (ALGY…IAIL).

The protein resides in the cell membrane. This is an uncharacterized protein from Methanocaldococcus jannaschii (strain ATCC 43067 / DSM 2661 / JAL-1 / JCM 10045 / NBRC 100440) (Methanococcus jannaschii).